A 380-amino-acid polypeptide reads, in one-letter code: Erythronate-4-phosphate dehydrogenase (380 aa).

Residues serine 45 and threonine 66 each contribute to the substrate site. NAD(+)-binding positions include aspartate 146, threonine 174, 205 to 207 (ASR), and aspartate 231. Arginine 207 is an active-site residue. Glutamate 236 is an active-site residue. The active-site Proton donor is histidine 253. Glycine 256 is a binding site for NAD(+). Tyrosine 257 lines the substrate pocket.

It belongs to the D-isomer specific 2-hydroxyacid dehydrogenase family. PdxB subfamily. In terms of assembly, homodimer.

The protein localises to the cytoplasm. It catalyses the reaction 4-phospho-D-erythronate + NAD(+) = (R)-3-hydroxy-2-oxo-4-phosphooxybutanoate + NADH + H(+). It functions in the pathway cofactor biosynthesis; pyridoxine 5'-phosphate biosynthesis; pyridoxine 5'-phosphate from D-erythrose 4-phosphate: step 2/5. Catalyzes the oxidation of erythronate-4-phosphate to 3-hydroxy-2-oxo-4-phosphonooxybutanoate. The polypeptide is Erythronate-4-phosphate dehydrogenase (Pseudomonas putida (strain GB-1)).